Here is a 351-residue protein sequence, read N- to C-terminus: uncharacterized protein (351 aa).

Residues 25 to 67 are disordered; the sequence is KKAETETLPPANSQPAAPAPEAKPTEAPVAKAEAKPETPAQPV. The span at 33 to 55 shows a compositional bias: low complexity; the sequence is PPANSQPAAPAPEAKPTEAPVAK.

This is an uncharacterized protein from Escherichia coli (strain K12).